A 681-amino-acid chain; its full sequence is Sodium/glucose cotransporter 4 (681 aa).

Residues 1–36 are Extracellular-facing; sequence MSKELAAMGPGASGDGVRTETAPHIALDSRVGLHAY. The chain crosses the membrane as a helical span at residues 37–57; that stretch reads DISVVVIYFVFVIAVGIWSSI. The Cytoplasmic segment spans residues 58–75; the sequence is RASRGTIGGYFLAGRSMS. Residues 76 to 98 form a helical membrane-spanning segment; sequence WWPIGASLMSSNVGSGLFIGLAG. At 99–114 the chain is on the extracellular side; it reads TGAAGGLAVGGFEWNA. Residues 115 to 135 traverse the membrane as a helical segment; the sequence is TWLLLALGWVFVPVYIAAGVV. The Cytoplasmic segment spans residues 136 to 157; that stretch reads TMPQYLKKRFGGQRIQVYMSVL. Residues 158 to 178 traverse the membrane as a helical segment; that stretch reads SLILYIFTKISTDIFSGALFI. Residues 179 to 190 are Extracellular-facing; the sequence is QMALGWNLYLST. Residues 191-211 traverse the membrane as a helical segment; the sequence is GILLVVTAVYTIAGGLMAVIY. At 212–217 the chain is on the cytoplasmic side; that stretch reads TDALQT. Residues 218–238 traverse the membrane as a helical segment; the sequence is VIMVGGALVLMFLGFQDVGWY. At 239–275 the chain is on the extracellular side; sequence PGLEQRYRQAIPNVTVPNTTCHLPRPDAFHILRDPVS. Residue asparagine 251 is glycosylated (N-linked (GlcNAc...) asparagine). A helical transmembrane segment spans residues 276 to 296; that stretch reads GDIPWPGLIFGLTVLATWCWC. Residues 297-317 are Cytoplasmic-facing; sequence TDQVIVQRSLSAKSLSHAKGG. Residues 318–338 traverse the membrane as a helical segment; it reads SVLGGYLKILPMFFIVMPGMI. Residues 339 to 383 lie on the Extracellular side of the membrane; the sequence is SRALFPDEVGCVDPDVCQRICGARVGCSNIAYPKLVMALMPVGLR. The chain crosses the membrane as a helical span at residues 384-406; sequence GLMIAVIMAALMSSLTSIFNSSS. Residues 407–427 lie on the Cytoplasmic side of the membrane; it reads TLFTIDVWQRFRRKSTEQELM. Residues 428–448 form a helical membrane-spanning segment; it reads VVGRVFVVFLVVISILWIPII. Topologically, residues 449 to 459 are extracellular; the sequence is QSSNSGQLFDY. The chain crosses the membrane as a helical span at residues 460–480; that stretch reads IQAVTSYLAPPITALFLLAIF. Residues 481-487 are Cytoplasmic-facing; the sequence is CKRVTEP. Residues 488-508 traverse the membrane as a helical segment; sequence GAFWGLVFGLGVGLLRMILEF. Residues 509 to 530 are Extracellular-facing; sequence SYPAPACGEVDRRPAVLKDFHY. A helical transmembrane segment spans residues 531-551; the sequence is LYFAILLCGLTAIVIVIVSLC. Residues 552–660 lie on the Cytoplasmic side of the membrane; the sequence is TTPIPEEQLT…SIEEEPLWRH (109 aa). Basic and acidic residues predominate over residues 579–591; the sequence is AHESTPEISERPA. A disordered region spans residues 579-614; it reads AHESTPEISERPAGECPAGGGAAENSSLGQEQPEAP. Residues serine 604 and serine 605 each carry the phosphoserine modification. Residues 661 to 681 traverse the membrane as a helical segment; it reads VCNINAVLLLAINIFLWGYFA.

The protein belongs to the sodium:solute symporter (SSF) (TC 2.A.21) family. Expressed in the small intestine, kidney and liver.

The protein resides in the cell membrane. The enzyme catalyses D-mannose(out) + n Na(+)(out) = D-mannose(in) + n Na(+)(in). Its function is as follows. Electrogenic Na(+)-coupled sugar symporter that may play a primary role in D-mannose and possibly D-fructose and D-glucose transport at the plasma membrane. Transporter activity is driven by a transmembrane Na(+) electrochemical gradient set by the Na(+)/K(+) pump. Exclusively recognizes sugar substrates having a pyranose ring with an axial hydroxyl group on carbon 2. In Homo sapiens (Human), this protein is Sodium/glucose cotransporter 4.